The following is a 777-amino-acid chain: MKTYTYSKQDLSFIEQLSQAYCKDPFSYLGLHQAGDVSVIRVFLPEATTVKILSADGQILSEALKIDDSGLFVAQLSQQYSSLNYRLRVGYSLAEIDLEDPYRFTSSLLPMDNWLLAEGTHLRPYEILGAHLKTQEGVSGVHFSVWAPNARRVSVVGDFNYWDGRVNPMRFHAESGIWDIFLPNVEKGALYKFEILDSNGNIRLKSDPYAFASQFRPDTASVVTGLPEKIEVDAKLRHANDPDQPISIYEVHLGSWRRHLENNYWLNYEEIANELIPYVKDMGFTHIELLPITEYPFDGSWGYQPTGLYSPTSRFGSPDDLRTLIRKAHEAGINVILDWVVGHFPTDSHGLTEFDGSHLYEHQDPREGYHQDWNTLIFNYGRHEVFNYLSSNALYWTERFGIDGLRVDAVSSMIYRDYSRKDGEWIPNQYGGRENLEALDFLRRTNRMLKKEGHGAVVIAEESTSFAGITHSPTENGVGFDYKWNMGWMNDTLRYMSLDPIYRQYHHDWMTFGMMYQYSEKFVLPLSHDEVVHGKCSILGKMSGDCWQKFANLRAYYGYMWGYPGKKLLFMGNEFAQGREWNYNESLDWFLLGEQGGGWHKGVLNWVRDLNRTYQKYPALYQLDYDPAGFEWLVVDDWQQSVFAFERKAKNGESVIVVSNFTPVVRHNYRIGVRQDGTYTEILNSDAAYYEGSNVGNYGEIECEAIESHGKPFSIELSIPPLSTIFIACQPKPKEAVEAEQDIVKMAEVAMQKALKPTKKTVSVKAKAHKKAHKNKK.

Catalysis depends on Asp-408, which acts as the Nucleophile. Catalysis depends on Glu-461, which acts as the Proton donor.

This sequence belongs to the glycosyl hydrolase 13 family. GlgB subfamily. Monomer.

The enzyme catalyses Transfers a segment of a (1-&gt;4)-alpha-D-glucan chain to a primary hydroxy group in a similar glucan chain.. It functions in the pathway glycan biosynthesis; glycogen biosynthesis. In terms of biological role, catalyzes the formation of the alpha-1,6-glucosidic linkages in glycogen by scission of a 1,4-alpha-linked oligosaccharide from growing alpha-1,4-glucan chains and the subsequent attachment of the oligosaccharide to the alpha-1,6 position. The polypeptide is 1,4-alpha-glucan branching enzyme GlgB (Actinobacillus pleuropneumoniae serotype 7 (strain AP76)).